A 576-amino-acid polypeptide reads, in one-letter code: Interleukin-1 receptor type 1 (576 aa).

An N-terminal signal peptide occupies residues 1–19 (MENMKVLLGLICLMVPLLS). Over 20 to 338 (LEIDVCTEYP…QLIYPVPDFK (319 aa)) the chain is Extracellular. 3 disulfides stabilise this stretch: C25/C107, C46/C99, and C145/C199. Ig-like C2-type domains are found at residues 25–115 (CTEY…VTVT), 121–213 (PGLC…YPVT), and 229–329 (PVIL…AHVQ). N63, N103, N174, N236, N252, N266, and N300 each carry an N-linked (GlcNAc...) asparagine glycan. Cysteines 251 and 315 form a disulfide. Residues 339–359 (NYLIGGFIILTATIVCCVCIY) form a helical membrane-spanning segment. Over 360–576 (KVFKVDIVLW…LPAATHLPLG (217 aa)) the chain is Cytoplasmic. Residues 386-541 (KTYDAYILYP…RFWKNLRYQM (156 aa)) form the TIR domain. Residue E473 is part of the active site. A Phosphotyrosine modification is found at Y499. T556 carries the phosphothreonine; by PKC modification.

The protein belongs to the interleukin-1 receptor family. As to quaternary structure, the interleukin-1 receptor complex is a heterodimer of IL1R1 and IL1RAP. Interacts with PIK3R1. Interacts with IL1A. In terms of processing, a soluble form (sIL1R1) is probably produced by proteolytic cleavage at the cell surface (shedding). Post-translationally, rapidly phosphorylated on Tyr-499 in response to IL-1, which creates a SH2 binding site for the PI 3-kinase regulatory subunit PIK3R1. Isoform 2 is expressed in various brain tissues.

The protein localises to the membrane. Its subcellular location is the cell membrane. It is found in the secreted. It carries out the reaction NAD(+) + H2O = ADP-D-ribose + nicotinamide + H(+). Receptor for IL1A, IL1B and IL1RN. After binding to interleukin-1 associates with the coreceptor IL1RAP to form the high affinity interleukin-1 receptor complex which mediates interleukin-1-dependent activation of NF-kappa-B, MAPK and other pathways. Signaling involves the recruitment of adapter molecules such as TOLLIP, MYD88, and IRAK1 or IRAK2 via the respective TIR domains of the receptor/coreceptor subunits. Binds ligands with comparable affinity and binding of antagonist IL1RN prevents association with IL1RAP to form a signaling complex. Involved in IL1B-mediated costimulation of IFNG production from T-helper 1 (Th1) cells. In terms of biological role, unable to mediate canonical IL-1 signaling. Cooperates with IL1RAP isoform 3 to mediate IL1B-induced neuronal activity including IL1B-potentiated NMDA-induced calcium influx mediated by Akt kinase activation. The sequence is that of Interleukin-1 receptor type 1 (Il1r1) from Mus musculus (Mouse).